We begin with the raw amino-acid sequence, 669 residues long: DNA ligase (669 aa).

NAD(+) contacts are provided by residues 34 to 38 (DAEYD), 83 to 84 (SL), and E114. The N6-AMP-lysine intermediate role is filled by K116. R137, E171, K287, and K311 together coordinate NAD(+). 4 residues coordinate Zn(2+): C405, C408, C423, and C428. Positions 591–669 (NIASYFAGKT…EERFLQELNK (79 aa)) constitute a BRCT domain.

The protein belongs to the NAD-dependent DNA ligase family. LigA subfamily. Mg(2+) is required as a cofactor. The cofactor is Mn(2+).

It catalyses the reaction NAD(+) + (deoxyribonucleotide)n-3'-hydroxyl + 5'-phospho-(deoxyribonucleotide)m = (deoxyribonucleotide)n+m + AMP + beta-nicotinamide D-nucleotide.. Its function is as follows. DNA ligase that catalyzes the formation of phosphodiester linkages between 5'-phosphoryl and 3'-hydroxyl groups in double-stranded DNA using NAD as a coenzyme and as the energy source for the reaction. It is essential for DNA replication and repair of damaged DNA. The protein is DNA ligase of Bacillus cytotoxicus (strain DSM 22905 / CIP 110041 / 391-98 / NVH 391-98).